A 596-amino-acid chain; its full sequence is Elongation factor 4 (596 aa).

The tr-type G domain maps to 2 to 184; the sequence is KHIRNFSIIA…TIVAQIPSPE (183 aa). GTP is bound by residues 14–19 and 131–134; these read DHGKST and NKID.

The protein belongs to the TRAFAC class translation factor GTPase superfamily. Classic translation factor GTPase family. LepA subfamily.

Its subcellular location is the cell inner membrane. The enzyme catalyses GTP + H2O = GDP + phosphate + H(+). Functionally, required for accurate and efficient protein synthesis under certain stress conditions. May act as a fidelity factor of the translation reaction, by catalyzing a one-codon backward translocation of tRNAs on improperly translocated ribosomes. Back-translocation proceeds from a post-translocation (POST) complex to a pre-translocation (PRE) complex, thus giving elongation factor G a second chance to translocate the tRNAs correctly. Binds to ribosomes in a GTP-dependent manner. This is Elongation factor 4 from Shewanella amazonensis (strain ATCC BAA-1098 / SB2B).